We begin with the raw amino-acid sequence, 266 residues long: 3-methyl-2-oxobutanoate hydroxymethyltransferase 2 (266 aa).

Mg(2+)-binding residues include Asp-45 and Asp-84. 3-methyl-2-oxobutanoate is bound by residues 45-46 (DS), Asp-84, and Lys-112. Position 114 (Glu-114) interacts with Mg(2+). The active-site Proton acceptor is the Glu-181.

The protein belongs to the PanB family. In terms of assembly, homodecamer; pentamer of dimers. Requires Mg(2+) as cofactor.

The protein resides in the cytoplasm. It catalyses the reaction 3-methyl-2-oxobutanoate + (6R)-5,10-methylene-5,6,7,8-tetrahydrofolate + H2O = 2-dehydropantoate + (6S)-5,6,7,8-tetrahydrofolate. It participates in cofactor biosynthesis; (R)-pantothenate biosynthesis; (R)-pantoate from 3-methyl-2-oxobutanoate: step 1/2. In terms of biological role, catalyzes the reversible reaction in which hydroxymethyl group from 5,10-methylenetetrahydrofolate is transferred onto alpha-ketoisovalerate to form ketopantoate. The polypeptide is 3-methyl-2-oxobutanoate hydroxymethyltransferase 2 (Pseudomonas fluorescens (strain ATCC BAA-477 / NRRL B-23932 / Pf-5)).